The sequence spans 585 residues: Protein FAM151A (585 aa).

Residues 14-34 (WVFAGITCVSVVVIAAIVLAI) traverse the membrane as a helical segment.

The protein belongs to the menorin family.

The protein resides in the membrane. In Homo sapiens (Human), this protein is Protein FAM151A (FAM151A).